The chain runs to 619 residues: ATP-dependent RNA helicase dbp9 (619 aa).

The interval 1-30 (MKRKLDANDVPSTEVAEEKETKDADNTDFE) is disordered. Residues 16–25 (AEEKETKDAD) show a composition bias toward basic and acidic residues. Residues 27 to 55 (TDFESLNLDPRLRQALIREQFTKPTPVQS) carry the Q motif motif. Residues 58-236 (IPLALEGKDI…GLFCRSPVIL (179 aa)) enclose the Helicase ATP-binding domain. Residue 71-78 (AKTGSGKT) participates in ATP binding. Residues 184–187 (DEAD) carry the DEAD box motif. Positions 247–484 (GISQFVVRCA…EVKPYHFEMK (238 aa)) constitute a Helicase C-terminal domain. Disordered stretches follow at residues 339–390 (SRTS…GKAK) and 582–619 (GDNR…RGRK). Basic and acidic residues predominate over residues 345-362 (KSKEATDGDDEAKDKMGS). The span at 587 to 604 (RKAREKNRGKGKGRKPSG) shows a compositional bias: basic residues.

It belongs to the DEAD box helicase family. DDX56/DBP9 subfamily.

It localises to the nucleus. The protein resides in the nucleolus. The enzyme catalyses ATP + H2O = ADP + phosphate + H(+). Functionally, ATP-binding RNA helicase involved in the biogenesis of 60S ribosomal subunits and is required for the normal formation of 25S and 5.8S rRNAs. The protein is ATP-dependent RNA helicase dbp9 (dbp9) of Neosartorya fischeri (strain ATCC 1020 / DSM 3700 / CBS 544.65 / FGSC A1164 / JCM 1740 / NRRL 181 / WB 181) (Aspergillus fischerianus).